The sequence spans 144 residues: Putative pre-16S rRNA nuclease (144 aa).

It belongs to the YqgF nuclease family.

The protein localises to the cytoplasm. Could be a nuclease involved in processing of the 5'-end of pre-16S rRNA. This chain is Putative pre-16S rRNA nuclease, found in Acaryochloris marina (strain MBIC 11017).